The primary structure comprises 367 residues: Flagellar P-ring protein (367 aa).

The signal sequence occupies residues 1-18 (MFRALITALFCFSGLALA).

The protein belongs to the FlgI family. In terms of assembly, the basal body constitutes a major portion of the flagellar organelle and consists of four rings (L,P,S, and M) mounted on a central rod.

The protein localises to the periplasm. It is found in the bacterial flagellum basal body. Functionally, assembles around the rod to form the L-ring and probably protects the motor/basal body from shearing forces during rotation. This Rhizorhabdus wittichii (strain DSM 6014 / CCUG 31198 / JCM 15750 / NBRC 105917 / EY 4224 / RW1) (Sphingomonas wittichii) protein is Flagellar P-ring protein.